Consider the following 83-residue polypeptide: U25-theraphotoxin-Cg1a (83 aa).

The signal sequence occupies residues 1 to 23 (MRFHTLLFLSFLLLVSCALICTA). Positions 24–48 (QHPGLKKSGMFHENVGKGQHIEKKR) are excised as a propeptide. Disulfide bonds link cysteine 50-cysteine 66, cysteine 57-cysteine 71, and cysteine 65-cysteine 81.

Belongs to the neurotoxin 07 (Beta/delta-agtx) family. 03 (aga-4) subfamily. JZTX sub-subfamily. In terms of tissue distribution, expressed by the venom gland.

It localises to the secreted. Functionally, inhibits TTX-sensitive sodium currents in rat dorsal root ganglion (DRG) neurons. This is U25-theraphotoxin-Cg1a from Chilobrachys guangxiensis (Chinese earth tiger tarantula).